The primary structure comprises 265 residues: Arcelin-2 (265 aa).

The N-terminal stretch at 1-21 is a signal peptide; it reads MASSNLLTLALFLVLLTHANS. N-linked (GlcNAc...) asparagine glycans are attached at residues Asn33 and Asn89. An intrachain disulfide couples Cys165 to Cys201.

It belongs to the leguminous lectin family.

Its function is as follows. Seed storage. This carbohydrate-binding lectin has toxic effects on bean bruchid pests. Antibiosis properties of legume lectins are proposed to be due to the lysis of epithelial cells of the intestine by binding to the carbohydrate moieties of these proteins. In Phaseolus vulgaris (Kidney bean), this protein is Arcelin-2 (ARC2).